Here is a 241-residue protein sequence, read N- to C-terminus: F-box protein At3g22350 (241 aa).

Residues 1–44 (MSDLPLDLVEEILSRVSATSLKRLRSTCKQWNTLFKKRSFSQKH) form the F-box domain.

In Arabidopsis thaliana (Mouse-ear cress), this protein is F-box protein At3g22350.